Reading from the N-terminus, the 354-residue chain is Guanine nucleotide-binding protein G(t) subunit alpha-3 (354 aa).

Residues 1-26 form a disordered region; the sequence is MGIGISSESKESAKRSKELEKKLQED. A lipid anchor (N-myristoyl glycine) is attached at Gly-2. Residues 8–26 show a composition bias toward basic and acidic residues; that stretch reads ESKESAKRSKELEKKLQED. The 323-residue stretch at 32 to 354 folds into the G-alpha domain; sequence RTVKLLLLGA…KENLKDCGLF (323 aa). Residues 35–48 form a G1 motif region; it reads KLLLLGAGESGKST. Residues 40-47, 175-181, 200-204, 269-272, and Ala-326 each bind GTP; these read GAGESGKS, LHSRVKT, DVGGQ, and NKKD. Mg(2+) is bound by residues Ser-47 and Thr-181. The segment at 173-181 is G2 motif; that stretch reads DVLHSRVKT. The G3 motif stretch occupies residues 196 to 205; it reads FRMFDVGGQR. Residues 265-272 are G4 motif; it reads VLFLNKKD. Residues 324–329 form a G5 motif region; sequence TCATDT.

The protein belongs to the G-alpha family. G(i/o/t/z) subfamily. G proteins are composed of 3 units; alpha, beta and gamma, respectively GNAT3, GNB1 and GNG13 for Gustducin heterotrimer for bitter taste transduction. The alpha chain contains the guanine nucleotide binding site. Component of the TAS2R14-GNAT3 complex, consisting of TAS2R14, GNAT3, GNB1 and GNG2; within the complex interacts with TAS2R14; this complex plays a role in the perception of bitterness. Gustducin heterotrimer may also be composed of GNAT3, GNB3 and GNG13. Expressed in epithelial cells of taste buds of the circumvallate, foliate and fungiform. Detected in various region of the respiratory track. Expressed also in spermatozoa.

The protein localises to the cytoplasm. Guanine nucleotide-binding protein (G protein) alpha subunit playing a prominent role in bitter and sweet taste transduction as well as in umami (monosodium glutamate, monopotassium glutamate, and inosine monophosphate) taste transduction. The sequence is that of Guanine nucleotide-binding protein G(t) subunit alpha-3 (GNAT3) from Bos taurus (Bovine).